The sequence spans 680 residues: Meiotic recombination protein REC8 (680 aa).

Low complexity-rich tracts occupy residues 278–290 and 436–446; these read ENDNENNSNGGED and SLVSTQSSSST. Disordered stretches follow at residues 278–297, 431–467, and 540–560; these read ENDNENNSNGGEDTSVENEG, RKRAHSLVSTQSSSSTRSHEYGRKSFRNNKNDNYSSD, and EQNFAEEDDSSNSCFSDGSQQ. The span at 550–560 shows a compositional bias: polar residues; that stretch reads SNSCFSDGSQQ.

It belongs to the rad21 family. Post-translationally, proteolytically cleaved by ESP1. In terms of processing, phosphorylated by CDC5. CDC5 phosphorylation is necessary for cleavage by ESP1 and subsequent removal from chromosome arms.

It is found in the nucleus. It localises to the chromosome. Its subcellular location is the centromere. In terms of biological role, replaces the SCC1 mitosis-specific cohesin to ensure sister chromatid cohesion during meiosis. Is cleaved by ESP1 shortly before the first meiotic division, and dissociates from chromatin, allowing sister chromatids to segregate. Is protected from cleavage by SPO13. Promotes localization of the LINC complex subunit MPS3 on nuclear envelope in mitotic cells. This is Meiotic recombination protein REC8 from Saccharomyces cerevisiae (strain ATCC 204508 / S288c) (Baker's yeast).